Consider the following 253-residue polypeptide: Ubiquinone/menaquinone biosynthesis C-methyltransferase UbiE (253 aa).

S-adenosyl-L-methionine is bound by residues Thr76, Asp97, 125–126 (NA), and Ser142.

The protein belongs to the class I-like SAM-binding methyltransferase superfamily. MenG/UbiE family.

It catalyses the reaction a 2-demethylmenaquinol + S-adenosyl-L-methionine = a menaquinol + S-adenosyl-L-homocysteine + H(+). The enzyme catalyses a 2-methoxy-6-(all-trans-polyprenyl)benzene-1,4-diol + S-adenosyl-L-methionine = a 5-methoxy-2-methyl-3-(all-trans-polyprenyl)benzene-1,4-diol + S-adenosyl-L-homocysteine + H(+). Its pathway is quinol/quinone metabolism; menaquinone biosynthesis; menaquinol from 1,4-dihydroxy-2-naphthoate: step 2/2. It participates in cofactor biosynthesis; ubiquinone biosynthesis. Methyltransferase required for the conversion of demethylmenaquinol (DMKH2) to menaquinol (MKH2) and the conversion of 2-polyprenyl-6-methoxy-1,4-benzoquinol (DDMQH2) to 2-polyprenyl-3-methyl-6-methoxy-1,4-benzoquinol (DMQH2). The protein is Ubiquinone/menaquinone biosynthesis C-methyltransferase UbiE of Xanthomonas oryzae pv. oryzae (strain MAFF 311018).